The primary structure comprises 123 residues: Small ribosomal subunit protein uS12 (123 aa).

3-methylthioaspartic acid is present on D89. Residues 104–123 (SVGVKDRKKSRSKYGAKRPK) form a disordered region. Over residues 109–123 (DRKKSRSKYGAKRPK) the composition is skewed to basic residues.

This sequence belongs to the universal ribosomal protein uS12 family. As to quaternary structure, part of the 30S ribosomal subunit. Contacts proteins S8 and S17. May interact with IF1 in the 30S initiation complex.

Functionally, with S4 and S5 plays an important role in translational accuracy. Its function is as follows. Interacts with and stabilizes bases of the 16S rRNA that are involved in tRNA selection in the A site and with the mRNA backbone. Located at the interface of the 30S and 50S subunits, it traverses the body of the 30S subunit contacting proteins on the other side and probably holding the rRNA structure together. The combined cluster of proteins S8, S12 and S17 appears to hold together the shoulder and platform of the 30S subunit. The polypeptide is Small ribosomal subunit protein uS12 (Pelobacter propionicus (strain DSM 2379 / NBRC 103807 / OttBd1)).